The chain runs to 145 residues: 3-hydroxyacyl-[acyl-carrier-protein] dehydratase FabZ (145 aa).

His47 is an active-site residue.

This sequence belongs to the thioester dehydratase family. FabZ subfamily.

It is found in the cytoplasm. The catalysed reaction is a (3R)-hydroxyacyl-[ACP] = a (2E)-enoyl-[ACP] + H2O. Its function is as follows. Involved in unsaturated fatty acids biosynthesis. Catalyzes the dehydration of short chain beta-hydroxyacyl-ACPs and long chain saturated and unsaturated beta-hydroxyacyl-ACPs. The polypeptide is 3-hydroxyacyl-[acyl-carrier-protein] dehydratase FabZ (Ruthia magnifica subsp. Calyptogena magnifica).